A 78-amino-acid polypeptide reads, in one-letter code: NAD(P)H-quinone oxidoreductase subunit O (78 aa).

The protein belongs to the complex I NdhO subunit family. As to quaternary structure, NDH-1 can be composed of about 15 different subunits; different subcomplexes with different compositions have been identified which probably have different functions.

The protein localises to the cell inner membrane. The enzyme catalyses a plastoquinone + NADH + (n+1) H(+)(in) = a plastoquinol + NAD(+) + n H(+)(out). It catalyses the reaction a plastoquinone + NADPH + (n+1) H(+)(in) = a plastoquinol + NADP(+) + n H(+)(out). NDH-1 shuttles electrons from an unknown electron donor, via FMN and iron-sulfur (Fe-S) centers, to quinones in the respiratory and/or the photosynthetic chain. The immediate electron acceptor for the enzyme in this species is believed to be plastoquinone. Couples the redox reaction to proton translocation, and thus conserves the redox energy in a proton gradient. Cyanobacterial NDH-1 also plays a role in inorganic carbon-concentration. In Gloeobacter violaceus (strain ATCC 29082 / PCC 7421), this protein is NAD(P)H-quinone oxidoreductase subunit O.